The chain runs to 493 residues: UDP-glucose 6-dehydrogenase (493 aa).

NAD(+) contacts are provided by residues 11–16 (GAGYVG), Asp36, Arg41, and 89–93 (VNTPT). The segment at 88–110 (SVNTPTKTYGMGKGRAADLKYIE) is disordered. N6-acetyllysine is present on Lys107. Residues 129–135 (KSTVPVR) form an allosteric switch region region. 130–132 (STV) contributes to the NAD(+) binding site. The active-site Proton donor/acceptor is the Glu161. Substrate is bound by residues 161–165 (EFLAE), 220–224 (KLAAN), Arg260, and 267–273 (KASVGFG). Glu165 contributes to the NAD(+) binding site. Lys220 serves as the catalytic Proton donor/acceptor. Cys276 serves as the catalytic Nucleophile. 276 to 279 (CFQK) serves as a coordination point for NAD(+). The segment at 321 to 325 (SLFNT) is important for formation of active hexamer structure. A substrate-binding site is contributed by 338–339 (FK). Position 346 (Arg346) interacts with NAD(+). Arg442 lines the substrate pocket. The segment at 466–493 (VSSKRIPYTPGEIPKFSLQDPPNKKPKV) is disordered. The residue at position 474 (Thr474) is a Phosphothreonine.

It belongs to the UDP-glucose/GDP-mannose dehydrogenase family. In terms of assembly, homohexamer.

It carries out the reaction UDP-alpha-D-glucose + 2 NAD(+) + H2O = UDP-alpha-D-glucuronate + 2 NADH + 3 H(+). It participates in nucleotide-sugar biosynthesis; UDP-alpha-D-glucuronate biosynthesis; UDP-alpha-D-glucuronate from UDP-alpha-D-glucose: step 1/1. UDP-alpha-D-xylose (UDX) acts as a feedback inhibitor. It binds at the same site as the substrate, but functions as allosteric inhibitor by triggering a conformation change that disrupts the active hexameric ring structure and gives rise to an inactive, horseshoe-shaped hexamer. Functionally, catalyzes the formation of UDP-alpha-D-glucuronate, a constituent of complex glycosaminoglycans. Required for the biosynthesis of chondroitin sulfate and heparan sulfate. Required for embryonic development via its role in the biosynthesis of glycosaminoglycans. Required for proper brain and neuronal development. The polypeptide is UDP-glucose 6-dehydrogenase (Ugdh) (Mus musculus (Mouse)).